The chain runs to 425 residues: Na(+)/H(+) antiporter NhaA 1 (425 aa).

A run of 11 helical transmembrane segments spans residues 20 to 40 (AGGV…NSPL), 65 to 85 (PHLW…GLEI), 102 to 122 (LPFI…LAVT), 131 to 151 (GWAI…ALLG), 160 to 180 (LFLT…IALA), 183 to 203 (ASIK…MMAM), 218 to 238 (FVLL…AGVL), 272 to 292 (FLIV…GFSL), 303 to 323 (IAAG…WAAV), 342 to 362 (LSVL…LAFA), and 373 to 393 (LGVI…LRFA).

This sequence belongs to the NhaA Na(+)/H(+) (TC 2.A.33) antiporter family.

The protein resides in the cell inner membrane. It carries out the reaction Na(+)(in) + 2 H(+)(out) = Na(+)(out) + 2 H(+)(in). Na(+)/H(+) antiporter that extrudes sodium in exchange for external protons. This Novosphingobium aromaticivorans (strain ATCC 700278 / DSM 12444 / CCUG 56034 / CIP 105152 / NBRC 16084 / F199) protein is Na(+)/H(+) antiporter NhaA 1.